The sequence spans 165 residues: uncharacterized protein (165 aa).

5 helical membrane-spanning segments follow: residues 30 to 50, 65 to 85, 86 to 106, 108 to 128, and 131 to 151; these read GWEL…AAGG, GMVW…VSGL, SAFW…VWQG, FWLL…FASG, and WTVT…SEYG.

The protein to E.coli YcdZ.

It localises to the cell membrane. This is an uncharacterized protein from Escherichia coli (strain K12).